Here is a 931-residue protein sequence, read N- to C-terminus: Aconitate hydratase A (931 aa).

Residues 402 to 454 (SASPVDEASAESFPASDAPAYGSQENGAGAPQHADGTGAAVPSNPVTVTAPDG) are disordered. The [4Fe-4S] cluster site is built by cysteine 472, cysteine 538, and cysteine 541.

This sequence belongs to the aconitase/IPM isomerase family. [4Fe-4S] cluster is required as a cofactor.

It catalyses the reaction citrate = D-threo-isocitrate. The enzyme catalyses citrate = cis-aconitate + H2O. The catalysed reaction is cis-aconitate + H2O = D-threo-isocitrate. The protein operates within carbohydrate metabolism; tricarboxylic acid cycle; isocitrate from oxaloacetate: step 2/2. Its function is as follows. Catalyzes the reversible isomerization of citrate to isocitrate via cis-aconitate in the tricarboxylic acid (TCA) cycle. Aconitase activity is important for the initiation of morphological and physiological differentiation of S.viridochromogenes. In addition, the apo form of AcnA (lacking the [4Fe-4S] cluster) functions as a RNA-binding regulatory protein, which binds to iron responsive elements (IREs) located on the untranslated region of certain mRNAs, including recA and ftsZ. Binding to IRE-like structures probably alters the target mRNA stability and regulates the protein amount. The apo form plays a regulatory role in oxidative stress response. This chain is Aconitate hydratase A, found in Streptomyces viridochromogenes (strain DSM 40736 / JCM 4977 / BCRC 1201 / Tue 494).